The sequence spans 572 residues: NADH-ubiquinone oxidoreductase chain 5 (572 aa).

The next 16 membrane-spanning stretches (helical) occupy residues 4 to 24 (ISFV…LYFL), 44 to 64 (IVMT…VLMI), 86 to 106 (IMLV…PNLI), 107 to 127 (SILL…IYFQ), 147 to 167 (VALL…YIFY), 170 to 190 (IMQN…AAMT), 217 to 237 (SSTL…ILST), 239 to 259 (WLGQ…GLGA), 268 to 288 (IIAL…SMGF), 294 to 314 (FHLL…GAII), 337 to 357 (SACF…AGFY), 372 to 394 (NMFS…FRLV), 422 to 442 (MGLL…IFPF), 457 to 477 (LFVC…NLFF), 490 to 510 (FLGS…FYPL), and 552 to 572 (LKIY…LLFL).

This sequence belongs to the complex I subunit 5 family.

Its subcellular location is the mitochondrion inner membrane. The catalysed reaction is a ubiquinone + NADH + 5 H(+)(in) = a ubiquinol + NAD(+) + 4 H(+)(out). In terms of biological role, core subunit of the mitochondrial membrane respiratory chain NADH dehydrogenase (Complex I) that is believed to belong to the minimal assembly required for catalysis. Complex I functions in the transfer of electrons from NADH to the respiratory chain. The immediate electron acceptor for the enzyme is believed to be ubiquinone. The chain is NADH-ubiquinone oxidoreductase chain 5 (mt:ND5) from Drosophila melanogaster (Fruit fly).